The chain runs to 67 residues: Protein AaeX (67 aa).

2 helical membrane-spanning segments follow: residues 3–23 (VLPV…EIIV) and 43–63 (LVWH…YVVS).

It belongs to the AaeX family.

It is found in the cell membrane. The protein is Protein AaeX of Erwinia tasmaniensis (strain DSM 17950 / CFBP 7177 / CIP 109463 / NCPPB 4357 / Et1/99).